A 482-amino-acid chain; its full sequence is Cobyric acid synthase (482 aa).

One can recognise a GATase cobBQ-type domain in the interval 249–436 (QCKIACLALS…LHGLFTSDDF (188 aa)). The active-site Nucleophile is the cysteine 331. Histidine 428 is an active-site residue.

This sequence belongs to the CobB/CobQ family. CobQ subfamily.

The protein operates within cofactor biosynthesis; adenosylcobalamin biosynthesis. Catalyzes amidations at positions B, D, E, and G on adenosylcobyrinic A,C-diamide. NH(2) groups are provided by glutamine, and one molecule of ATP is hydrogenolyzed for each amidation. This chain is Cobyric acid synthase, found in Bradyrhizobium diazoefficiens (strain JCM 10833 / BCRC 13528 / IAM 13628 / NBRC 14792 / USDA 110).